The chain runs to 233 residues: Large ribosomal subunit protein uL1 (233 aa).

It belongs to the universal ribosomal protein uL1 family. In terms of assembly, part of the 50S ribosomal subunit.

Functionally, binds directly to 23S rRNA. The L1 stalk is quite mobile in the ribosome, and is involved in E site tRNA release. Protein L1 is also a translational repressor protein, it controls the translation of the L11 operon by binding to its mRNA. The sequence is that of Large ribosomal subunit protein uL1 from Shewanella sp. (strain ANA-3).